A 262-amino-acid chain; its full sequence is 3-deoxy-manno-octulosonate cytidylyltransferase (262 aa).

It belongs to the KdsB family.

It localises to the cytoplasm. The enzyme catalyses 3-deoxy-alpha-D-manno-oct-2-ulosonate + CTP = CMP-3-deoxy-beta-D-manno-octulosonate + diphosphate. It functions in the pathway nucleotide-sugar biosynthesis; CMP-3-deoxy-D-manno-octulosonate biosynthesis; CMP-3-deoxy-D-manno-octulosonate from 3-deoxy-D-manno-octulosonate and CTP: step 1/1. It participates in bacterial outer membrane biogenesis; lipopolysaccharide biosynthesis. Functionally, activates KDO (a required 8-carbon sugar) for incorporation into bacterial lipopolysaccharide in Gram-negative bacteria. The protein is 3-deoxy-manno-octulosonate cytidylyltransferase of Acidovorax ebreus (strain TPSY) (Diaphorobacter sp. (strain TPSY)).